Reading from the N-terminus, the 288-residue chain is Light-independent protochlorophyllide reductase iron-sulfur ATP-binding protein (288 aa).

Residues 12 to 17 (GIGKST) and Lys41 contribute to the ATP site. Ser16 provides a ligand contact to Mg(2+). 2 residues coordinate [4Fe-4S] cluster: Cys97 and Cys131. 182–183 (NR) contributes to the ATP binding site.

This sequence belongs to the NifH/BchL/ChlL family. Homodimer. Protochlorophyllide reductase is composed of three subunits; ChlL, ChlN and ChlB. The cofactor is [4Fe-4S] cluster.

It carries out the reaction chlorophyllide a + oxidized 2[4Fe-4S]-[ferredoxin] + 2 ADP + 2 phosphate = protochlorophyllide a + reduced 2[4Fe-4S]-[ferredoxin] + 2 ATP + 2 H2O. The protein operates within porphyrin-containing compound metabolism; chlorophyll biosynthesis (light-independent). Component of the dark-operative protochlorophyllide reductase (DPOR) that uses Mg-ATP and reduced ferredoxin to reduce ring D of protochlorophyllide (Pchlide) to form chlorophyllide a (Chlide). This reaction is light-independent. The L component serves as a unique electron donor to the NB-component of the complex, and binds Mg-ATP. The polypeptide is Light-independent protochlorophyllide reductase iron-sulfur ATP-binding protein (Picosynechococcus sp. (strain ATCC 27264 / PCC 7002 / PR-6) (Agmenellum quadruplicatum)).